Reading from the N-terminus, the 261-residue chain is Syntaxin-7 (261 aa).

An N-acetylserine modification is found at serine 2. At 2–238 (SYTPGVGGDP…DYQRKSRKTL (237 aa)) the chain is on the cytoplasmic side. Position 4 is a phosphothreonine (threonine 4). The residue at position 45 (serine 45) is a Phosphoserine. The stretch at 47 to 69 (ELRQQLQQKQQYTNQLAKETDKY) forms a coiled coil. Serine 75 carries the post-translational modification Phosphoserine. The residue at position 79 (threonine 79) is a Phosphothreonine. Phosphoserine is present on residues serine 125, serine 126, serine 129, and serine 205. The interval 129–148 (SGSFPEDSSKERNLVSWESQ) is disordered. A t-SNARE coiled-coil homology domain is found at 165-227 (LRLIHERESS…QQANQQLSRA (63 aa)). The helical; Anchor for type IV membrane protein transmembrane segment at 239–259 (CIIILILVIGVAIISLIIWGL) threads the bilayer. Over 260–261 (NH) the chain is Vesicular.

This sequence belongs to the syntaxin family. As to quaternary structure, forms a SNARE complex with VTI1B, STX8 and VAMP8 which functions in the homotypic fusion of late endosomes. Component of the SNARE complex composed of STX7, STX8, VAMP7 and VTI1B that is required for heterotypic fusion of late endosomes with lysosomes. Interacts with VPS11, VPS16 and VPS18. Interacts with VPS33A. Interacts with TPC1. Highest expression is found in placenta followed by heart, skeletal muscle, kidney and brain. Low expression is found in pancreas, lung and liver.

It localises to the early endosome membrane. May be involved in protein trafficking from the plasma membrane to the early endosome (EE) as well as in homotypic fusion of endocytic organelles. Mediates the endocytic trafficking from early endosomes to late endosomes and lysosomes. In Homo sapiens (Human), this protein is Syntaxin-7 (STX7).